Here is a 244-residue protein sequence, read N- to C-terminus: tRNA (guanine-N(1)-)-methyltransferase (244 aa).

S-adenosyl-L-methionine is bound by residues Gly-113 and 133-138; that span reads IGDYVL.

The protein belongs to the RNA methyltransferase TrmD family. As to quaternary structure, homodimer.

The protein localises to the cytoplasm. The enzyme catalyses guanosine(37) in tRNA + S-adenosyl-L-methionine = N(1)-methylguanosine(37) in tRNA + S-adenosyl-L-homocysteine + H(+). Functionally, specifically methylates guanosine-37 in various tRNAs. The chain is tRNA (guanine-N(1)-)-methyltransferase from Bacillus cereus (strain B4264).